The chain runs to 353 residues: Mitochondrial import inner membrane translocase subunit TIM50 (353 aa).

The N-terminal 44 residues, 1-44, are a transit peptide targeting the mitochondrion; that stretch reads MAASAAVFSRLRSGLRLGSRGLCTRLATPPRRAPDQAAEIGSRG. Residues 25–60 are disordered; sequence RLATPPRRAPDQAAEIGSRGSTKAQGPQQQPGSEGP. Ser45 carries the post-translational modification Phosphoserine. Residues 45–65 are Mitochondrial matrix-facing; it reads STKAQGPQQQPGSEGPSYAKK. Residues 49 to 60 are compositionally biased toward low complexity; that stretch reads QGPQQQPGSEGP. The chain crosses the membrane as a helical span at residues 66–86; that stretch reads VALWLAGLLGAGGTVSVVYIF. Residues 87–353 are Mitochondrial intermembrane-facing; sequence GNNPVDENGA…SRLWPRSKQP (267 aa). The 144-residue stretch at 143 to 286 folds into the FCP1 homology domain; that stretch reads YYQPPYTLVL…LDLSAFLKTI (144 aa). Ser341 bears the Phosphoserine mark.

The protein belongs to the TIM50 family. In terms of assembly, component of the TIM23 complex at least composed of TIMM23, TIMM17 (TIMM17A or TIMM17B) and TIMM50; within this complex, directly interacts with TIMM23. The complex interacts with the TIMM44 component of the PAM complex and with DNAJC15. As to quaternary structure, interacts with COIL and snRNPs. As to expression, widely expressed. Expressed at higher level in brain, kidney and liver (at protein level).

It localises to the mitochondrion inner membrane. The protein resides in the nucleus speckle. Functionally, essential component of the TIM23 complex, a complex that mediates the translocation of transit peptide-containing proteins across the mitochondrial inner membrane. Has some phosphatase activity in vitro; however such activity may not be relevant in vivo. May participate in the release of snRNPs and SMN from the Cajal body. This is Mitochondrial import inner membrane translocase subunit TIM50 (TIMM50) from Homo sapiens (Human).